Here is a 432-residue protein sequence, read N- to C-terminus: Phosphomevalonate kinase (432 aa).

ATP-binding positions include lysine 10 and 142–148 (VEKTGLG).

This sequence belongs to the GHMP kinase family. Mevalonate kinase subfamily.

It is found in the cytoplasm. The enzyme catalyses (R)-5-phosphomevalonate + ATP = (R)-5-diphosphomevalonate + ADP. It functions in the pathway isoprenoid biosynthesis; isopentenyl diphosphate biosynthesis via mevalonate pathway; isopentenyl diphosphate from (R)-mevalonate: step 2/3. Functionally, phosphomevalonate kinase; part of the second module of ergosterol biosynthesis pathway that includes the middle steps of the pathway. ERG8 converts 5-phosphomevalonate to 5-diphosphomevalonate. The second module is carried out in the vacuole and involves the formation of farnesyl diphosphate, which is also an important intermediate in the biosynthesis of ubiquinone, dolichol, heme and prenylated proteins. Activity by the mevalonate kinase ERG12 first converts mevalonate into 5-phosphomevalonate. 5-phosphomevalonate is then further converted to 5-diphosphomevalonate by the phosphomevalonate kinase ERG8. The diphosphomevalonate decarboxylase MVD then produces isopentenyl diphosphate. The isopentenyl-diphosphate delta-isomerase IDI1 then catalyzes the 1,3-allylic rearrangement of the homoallylic substrate isopentenyl (IPP) to its highly electrophilic allylic isomer, dimethylallyl diphosphate (DMAPP). Finally the farnesyl diphosphate synthase ERG20 catalyzes the sequential condensation of isopentenyl pyrophosphate with dimethylallyl pyrophosphate, and then with the resultant geranylpyrophosphate to the ultimate product farnesyl pyrophosphate. The protein is Phosphomevalonate kinase of Candida albicans (strain SC5314 / ATCC MYA-2876) (Yeast).